Consider the following 251-residue polypeptide: MQIHLLIVDALNLIRRIHAVQGSPSVNACQHALQQLISHSQPTHAVAVFDEDDRSDSWRHQSLPDYKAGRSPMSDNLQQEMPLIREAFNSLGVNCWSSPGNEADDLAATLAVKIGGAGHQVTIVSTDKGYCQLLAPNVQIRDYFQKRWLDMPFVKQEFGVLPHQLPDYWGLAGISSSKIPGVAGIGAKTAALLLQQASSLEQLYQELDSVPEKWRKKLQQHQEMAFICKQIATLKTDLPLSGNLQQLRLNR.

Positions 51-72 (EDDRSDSWRHQSLPDYKAGRSP) are disordered. D104 contacts Mg(2+). One can recognise a 5'-3' exonuclease domain in the interval 160–249 (VLPHQLPDYW…LSGNLQQLRL (90 aa)). K(+) is bound by residues L171, A172, P180, V182, and I185. The tract at residues 184-189 (GIGAKT) is interaction with DNA.

It belongs to the Xni family. It depends on Mg(2+) as a cofactor. Requires K(+) as cofactor.

Has flap endonuclease activity. During DNA replication, flap endonucleases cleave the 5'-overhanging flap structure that is generated by displacement synthesis when DNA polymerase encounters the 5'-end of a downstream Okazaki fragment. The chain is Flap endonuclease Xni from Yersinia enterocolitica serotype O:8 / biotype 1B (strain NCTC 13174 / 8081).